The primary structure comprises 107 residues: Large ribosomal subunit protein eL21 (107 aa).

The protein belongs to the eukaryotic ribosomal protein eL21 family.

The polypeptide is Large ribosomal subunit protein eL21 (rpl21e) (Aeropyrum pernix (strain ATCC 700893 / DSM 11879 / JCM 9820 / NBRC 100138 / K1)).